Here is a 339-residue protein sequence, read N- to C-terminus: UDP-N-acetylenolpyruvoylglucosamine reductase (339 aa).

The 173-residue stretch at G16–Q188 folds into the FAD-binding PCMH-type domain. R164 is a catalytic residue. Residue S238 is the Proton donor of the active site. The active site involves E334.

The protein belongs to the MurB family. FAD is required as a cofactor.

Its subcellular location is the cytoplasm. The catalysed reaction is UDP-N-acetyl-alpha-D-muramate + NADP(+) = UDP-N-acetyl-3-O-(1-carboxyvinyl)-alpha-D-glucosamine + NADPH + H(+). Its pathway is cell wall biogenesis; peptidoglycan biosynthesis. Cell wall formation. In Amoebophilus asiaticus (strain 5a2), this protein is UDP-N-acetylenolpyruvoylglucosamine reductase.